Here is a 331-residue protein sequence, read N- to C-terminus: MNTEATQDHQEANTTGARLRHAREQLGLSQQAVAERLCLKVSTVRDIEDDKAPADLASTFLRGYIRSYARLVHIPEDELLPMMAKQAPIRAAKVAPMQSFSLGKRRKKRDGWLMSFTWLVLFVVIGLSGAWWWQDHKAQQEEISTMADQSSAELNGGDANSQNVPLDTSAPAAPTADSAANSAPTDTASAPTTSAPAQTPADNNAVVAPSQANVDTAGTTPAAPATTPASPLPTDQANVTTPAASAQDLVMNFSADCWLEVSDATGKKLFSGLQRKGGNLNLSGQAPYKLKIGAPAAVQIQYLGKPVDLSRFIRTNQVARLTLNAESSPAQ.

Residues 1–111 (MNTEATQDHQ…LGKRRKKRDG (111 aa)) are Cytoplasmic-facing. An HTH cro/C1-type domain is found at 19 to 71 (LRHAREQLGLSQQAVAERLCLKVSTVRDIEDDKAPADLASTFLRGYIRSYARL). Positions 30–49 (QQAVAERLCLKVSTVRDIED) form a DNA-binding region, H-T-H motif. A helical; Signal-anchor for type II membrane protein transmembrane segment spans residues 112–132 (WLMSFTWLVLFVVIGLSGAWW). At 133 to 331 (WQDHKAQQEE…TLNAESSPAQ (199 aa)) the chain is on the periplasmic side. Residues 146-166 (MADQSSAELNGGDANSQNVPL) show a composition bias toward polar residues. The disordered stretch occupies residues 146 to 238 (MADQSSAELN…ASPLPTDQAN (93 aa)). 2 stretches are compositionally biased toward low complexity: residues 167 to 202 (DTSA…TPAD) and 216 to 234 (TAGT…PLPT).

Belongs to the RodZ family.

The protein localises to the cell inner membrane. Its function is as follows. Cytoskeletal protein that is involved in cell-shape control through regulation of the length of the long axis. The protein is Cytoskeleton protein RodZ of Klebsiella pneumoniae subsp. pneumoniae (strain ATCC 700721 / MGH 78578).